A 634-amino-acid polypeptide reads, in one-letter code: Kinesin-like protein KIF22 (634 aa).

A Kinesin motor domain is found at 19 to 345 (RVRVAVRLRP…LNFAAKSKQI (327 aa)). Residue 103-110 (GPTGAGKT) coordinates ATP. The disordered stretch occupies residues 357-406 (APTIAPGKRTREEQEAGGSGEPQNKRSKEGKKAEHSPSPPLHPQSSPDSS). Residues 379–391 (QNKRSKEGKKAEH) are compositionally biased toward basic and acidic residues. A coiled-coil region spans residues 421–471 (SAERERLNLLKTVAQSRKEIQMLKEKQKELEDKANMFNKQKETTEKESKDA).

It belongs to the TRAFAC class myosin-kinesin ATPase superfamily. Kinesin family. In terms of processing, ubiquitinated, leading to its subsequent proteasomal degradation.

It localises to the nucleus. The protein localises to the cytoplasm. The protein resides in the cytoskeleton. Kinesin family member that is involved in spindle formation and the movements of chromosomes during mitosis and meiosis. Binds to microtubules and to DNA. The polypeptide is Kinesin-like protein KIF22 (kif22) (Danio rerio (Zebrafish)).